Consider the following 277-residue polypeptide: Outer membrane lipoprotein 1 (277 aa).

An N-terminal signal peptide occupies residues 1–19 (MSFKKILGVALVSALALTA). The N-palmitoyl cysteine moiety is linked to residue C20. Residue C20 is the site of S-diacylglycerol cysteine attachment.

It belongs to the NlpA lipoprotein family.

The protein localises to the cell outer membrane. The polypeptide is Outer membrane lipoprotein 1 (plpA) (Mannheimia haemolytica (Pasteurella haemolytica)).